The primary structure comprises 394 residues: 8-amino-7-oxononanoate synthase (394 aa).

R22 contacts substrate. 113 to 114 (GY) serves as a coordination point for pyridoxal 5'-phosphate. H138 contacts substrate. Residues S184, H212, and T240 each contribute to the pyridoxal 5'-phosphate site. At K243 the chain carries N6-(pyridoxal phosphate)lysine. T359 serves as a coordination point for substrate.

The protein belongs to the class-II pyridoxal-phosphate-dependent aminotransferase family. BioF subfamily. As to quaternary structure, homodimer. The cofactor is pyridoxal 5'-phosphate.

It carries out the reaction 6-carboxyhexanoyl-[ACP] + L-alanine + H(+) = (8S)-8-amino-7-oxononanoate + holo-[ACP] + CO2. It functions in the pathway cofactor biosynthesis; biotin biosynthesis. Its function is as follows. Catalyzes the decarboxylative condensation of pimeloyl-[acyl-carrier protein] and L-alanine to produce 8-amino-7-oxononanoate (AON), [acyl-carrier protein], and carbon dioxide. The sequence is that of 8-amino-7-oxononanoate synthase from Janthinobacterium sp. (strain Marseille) (Minibacterium massiliensis).